We begin with the raw amino-acid sequence, 941 residues long: Pre-mRNA-processing factor 6 (941 aa).

The disordered stretch occupies residues 1 to 79 (MNKKKKPFLG…DEDLNDTNYD (79 aa)). The span at 39–65 (DANDPVDDRHAPPGKRTVGDQMKKNQA) shows a compositional bias: basic and acidic residues. A compositionally biased stretch (acidic residues) spans 66-78 (ADDDDEDLNDTNY). Serine 143 carries the post-translational modification Phosphoserine. Threonine 180, threonine 266, and threonine 275 each carry phosphothreonine. Serine 279 is modified (phosphoserine). 9 HAT repeats span residues 384-416 (TDIR…LEEP), 418-444 (DARI…ARLE), 445-476 (TYEN…LEEA), 554-586 (NALE…FEKN), 588-620 (GTRE…SKWL), 622-654 (GDVP…LESE), 689-721 (GNIT…IEEQ), 723-755 (ELME…LEEK), and 855-887 (RKIT…FELQ).

As to quaternary structure, identified in the spliceosome B complex. Identified in the spliceosome C complex. Associates with the U5 snRNP particle. Component of the U4/U6-U5 tri-snRNP complex composed of the U4, U6 and U5 snRNAs and at least PRPF3, PRPF4, PRPF6, PRPF8, PRPF31, SNRNP200, TXNL4A, SNRNP40, DDX23, CD2BP2, PPIH, SNU13, EFTUD2, SART1 and USP39, LSm proteins LSm2-8 and Sm proteins. Interacts with ARAF1. Interacts with AR and NR3C1, but not ESR1, independently of the presence of hormones. Interacts with USH1G. Post-translationally, phosphorylated by PRP4K during spliceosome assembly.

Its subcellular location is the nucleus. The protein resides in the nucleoplasm. The protein localises to the nucleus speckle. Its function is as follows. Involved in pre-mRNA splicing as component of the U4/U6-U5 tri-snRNP complex, one of the building blocks of the spliceosome. Enhances dihydrotestosterone-induced transactivation activity of AR, as well as dexamethasone-induced transactivation activity of NR3C1, but does not affect estrogen-induced transactivation. The polypeptide is Pre-mRNA-processing factor 6 (Prpf6) (Rattus norvegicus (Rat)).